Here is a 534-residue protein sequence, read N- to C-terminus: Nuclear hormone receptor FTZ-F1 (534 aa).

The segment at residues 86 to 161 (EELCPVCGDK…VGMKLEAVRA (76 aa)) is a DNA-binding region (nuclear receptor). 2 consecutive NR C4-type zinc fingers follow at residues 89-109 (CPVC…CESC) and 125-149 (CVAE…FQKC). A compositionally biased stretch (low complexity) spans 227–246 (VSSLTSSPESSPGPALLGAQ). The disordered stretch occupies residues 227 to 296 (VSSLTSSPES…SSTAEATSTE (70 aa)). The segment covering 247 to 256 (PQPPQPPPPP) has biased composition (pro residues). Residues 278–296 (TQSNTAATPSSTAEATSTE) are compositionally biased toward low complexity. The NR LBD domain maps to 299–531 (RVSPMIREFV…TLLMEMLHAK (233 aa)).

It belongs to the nuclear hormone receptor family. NR5 subfamily. Present in all tissues examined.

Its subcellular location is the nucleus. May play an important role in development. This chain is Nuclear hormone receptor FTZ-F1 (FTZ-F1), found in Bombyx mori (Silk moth).